Reading from the N-terminus, the 119-residue chain is Large ribosomal subunit protein bL20 (119 aa).

This sequence belongs to the bacterial ribosomal protein bL20 family.

Binds directly to 23S ribosomal RNA and is necessary for the in vitro assembly process of the 50S ribosomal subunit. It is not involved in the protein synthesizing functions of that subunit. This Syntrophus aciditrophicus (strain SB) protein is Large ribosomal subunit protein bL20.